The following is a 201-amino-acid chain: Putative ankyrin repeat protein YahD (201 aa).

ANK repeat units lie at residues 5-34 (NLPA…DINT), 38-67 (QGKT…DINK), 71-100 (TCLN…DLNC), 104-134 (FGGV…NVNQ), 138-172 (VGWT…SPHL), and 176-201 (YGKT…AAGA).

The chain is Putative ankyrin repeat protein YahD (yahD) from Escherichia coli (strain K12).